Here is a 623-residue protein sequence, read N- to C-terminus: Protein vein (623 aa).

The N-terminal stretch at 1–40 (MYAQHLRKWSLKTKKQLMPLILLIISYMLLLNTCVLSSSA) is a signal peptide. 4 disordered regions span residues 70–98 (IPLS…SSNN), 130–162 (DAGS…SMQK), 184–214 (AASS…NYSS), and 229–317 (PESM…QRYN). Composition is skewed to low complexity over residues 72–98 (LSSD…SSNN) and 136–158 (PAQQ…QQQQ). N-linked (GlcNAc...) asparagine glycosylation is present at Asn76. Asn211 is a glycosylation site (N-linked (GlcNAc...) asparagine). Positions 233 to 248 (LEDRSPEQAARSRRDG) are enriched in basic and acidic residues. Residue Asn252 is glycosylated (N-linked (GlcNAc...) asparagine). Over residues 255–267 (RQQQRTGHRQQLQ) the composition is skewed to low complexity. Basic residues predominate over residues 305–316 (QRRKHQRKHQRY). N-linked (GlcNAc...) asparagine glycosylation is found at Asn350, Asn381, Asn424, Asn449, Asn521, and Asn574. The Ig-like C2-type domain maps to 457–542 (TKIFSKPSKA…AKNKASKAIA (86 aa)). Cystine bridges form between Cys478-Cys531, Cys566-Cys577, Cys571-Cys588, and Cys590-Cys599. In terms of domain architecture, EGF-like spans 561–599 (ASGIPCNFDYCFHNGTCRMIPDINEVYCRCPTEYFGNRC).

It is found in the secreted. In terms of biological role, ligand for the EGF receptor. Seems to play a role in the global proliferation of wing disc cells and the larval patterning. Shows a strong synergistic genetic interaction with spi, suggesting a molecular interdependence. Required for the development of interveins cells. The sequence is that of Protein vein (vn) from Drosophila melanogaster (Fruit fly).